The primary structure comprises 106 residues: Large ribosomal subunit protein uL24 (106 aa).

This sequence belongs to the universal ribosomal protein uL24 family. As to quaternary structure, part of the 50S ribosomal subunit.

In terms of biological role, one of two assembly initiator proteins, it binds directly to the 5'-end of the 23S rRNA, where it nucleates assembly of the 50S subunit. One of the proteins that surrounds the polypeptide exit tunnel on the outside of the subunit. This is Large ribosomal subunit protein uL24 from Parabacteroides distasonis (strain ATCC 8503 / DSM 20701 / CIP 104284 / JCM 5825 / NCTC 11152).